The following is a 359-amino-acid chain: Fe-S cluster assembly protein DRE2 (359 aa).

Residues 1–159 (MANILLLLHP…LFKKLSSNSN (159 aa)) form an N-terminal SAM-like domain region. The segment at 152-187 (KKLSSNSNNNNNSSSPIGLTDSSAANTDEETDEANV) is disordered. The span at 155-166 (SSNSNNNNNSSS) shows a compositional bias: low complexity. The segment at 159 to 228 (NNNNNSSSPI…DDLIKDSNQL (70 aa)) is linker. Residues 167 to 177 (PIGLTDSSAAN) are compositionally biased toward polar residues. [2Fe-2S] cluster contacts are provided by C240, C252, C255, and C257. The tract at residues 240-257 (CEIPNGKKRRKACKDCTC) is fe-S binding site A. [4Fe-4S] cluster contacts are provided by C322, C325, C333, and C336. 2 short sequence motifs (cx2C motif) span residues 322 to 325 (CGSC) and 333 to 336 (CDGC). The segment at 322 to 336 (CGSCALGDAFRCDGC) is fe-S binding site B.

The protein belongs to the anamorsin family. In terms of assembly, monomer. Interacts with TAH18. Interacts with MIA40. [2Fe-2S] cluster is required as a cofactor. [4Fe-4S] cluster serves as cofactor.

The protein resides in the cytoplasm. It is found in the mitochondrion intermembrane space. In terms of biological role, component of the cytosolic iron-sulfur (Fe-S) protein assembly (CIA) machinery required for the maturation of extramitochondrial Fe-S proteins. Part of an electron transfer chain functioning in an early step of cytosolic Fe-S biogenesis, facilitating the de novo assembly of a [4Fe-4S] cluster on the scaffold complex CFD1-NBP35. Electrons are transferred to DRE2 from NADPH via the FAD- and FMN-containing protein TAH18. TAH18-DRE2 are also required for the assembly of the diferric tyrosyl radical cofactor of ribonucleotide reductase (RNR), probably by providing electrons for reduction during radical cofactor maturation in the catalytic small subunit RNR2. The polypeptide is Fe-S cluster assembly protein DRE2 (Scheffersomyces stipitis (strain ATCC 58785 / CBS 6054 / NBRC 10063 / NRRL Y-11545) (Yeast)).